A 128-amino-acid chain; its full sequence is Large ribosomal subunit protein bL17 (128 aa).

This sequence belongs to the bacterial ribosomal protein bL17 family. As to quaternary structure, part of the 50S ribosomal subunit. Contacts protein L32.

The sequence is that of Large ribosomal subunit protein bL17 from Streptococcus agalactiae serotype Ia (strain ATCC 27591 / A909 / CDC SS700).